Consider the following 388-residue polypeptide: Arrestin-C (388 aa).

This sequence belongs to the arrestin family. As to quaternary structure, homodimer; disulfide-linked in response to retinal illumination. Interacts with CXCR4; the interaction is dependent on the C-terminal phosphorylation of CXCR4 and modulates the calcium ion mobilization activity of CXCR4. Interacts with GPR84. In terms of tissue distribution, inner and outer segments, and the inner plexiform regions of the retina.

It localises to the photoreceptor inner segment. The protein localises to the cell projection. The protein resides in the cilium. It is found in the photoreceptor outer segment. Its function is as follows. May play a role in an as yet undefined retina-specific signal transduction. Could bind to photoactivated-phosphorylated red/green opsins. This chain is Arrestin-C (ARR3), found in Homo sapiens (Human).